A 276-amino-acid chain; its full sequence is ATP synthase subunit a (276 aa).

Helical transmembrane passes span 49–69 (KPML…FAAA), 109–129 (YLFT…IPFI), 137–157 (SGMV…AGIS), 173–193 (GIRG…NILV), 203–223 (FANM…GEYI), 232–252 (APVG…EMLI), and 253–273 (QFLQ…GAVA).

It belongs to the ATPase A chain family. In terms of assembly, F-type ATPases have 2 components, CF(1) - the catalytic core - and CF(0) - the membrane proton channel. CF(1) has five subunits: alpha(3), beta(3), gamma(1), delta(1), epsilon(1). CF(0) has three main subunits: a(1), b(2) and c(9-12). The alpha and beta chains form an alternating ring which encloses part of the gamma chain. CF(1) is attached to CF(0) by a central stalk formed by the gamma and epsilon chains, while a peripheral stalk is formed by the delta and b chains.

It localises to the cell membrane. Functionally, key component of the proton channel; it plays a direct role in the translocation of protons across the membrane. This Nocardioides sp. (strain ATCC BAA-499 / JS614) protein is ATP synthase subunit a.